Reading from the N-terminus, the 263-residue chain is Probable elongation factor 1-beta/1-delta 2 (263 aa).

Position 2 is an N-acetylserine (Ser2). A disordered region spans residues 112–153 (QGQTSSVAAPAAAPAAAKEEAAGDDDFDLFGSEDEEEDEEKK). Residues 133-150 (AGDDDFDLFGSEDEEEDE) show a composition bias toward acidic residues.

This sequence belongs to the EF-1-beta/EF-1-delta family. In terms of assembly, EF-1 is composed of 4 subunits: alpha, beta, delta, and gamma.

Functionally, EF-1-beta and EF-1-delta stimulate the exchange of GDP bound to EF-1-alpha to GTP. The polypeptide is Probable elongation factor 1-beta/1-delta 2 (Caenorhabditis elegans).